We begin with the raw amino-acid sequence, 373 residues long: P2Y purinoceptor 2 (373 aa).

The Extracellular segment spans residues 1-32 (MAADLEPWNSTINGTWEGDELGYKCRFNEDFK). Residues N9 and N13 are each glycosylated (N-linked (GlcNAc...) asparagine). Residues 33 to 59 (YVLLPVSYGVVCVLGLCLNVVALYIFL) form a helical membrane-spanning segment. Topologically, residues 60-70 (CRLKTWNASTT) are cytoplasmic. Residues 71–93 (YMFHLAVSDSLYAASLPLLVYYY) traverse the membrane as a helical segment. The Extracellular portion of the chain corresponds to 94-110 (ARGDHWPFSTVLCKLVR). Cysteines 106 and 183 form a disulfide. Residues 111-129 (FLFYTNLYCSILFLTCISV) form a helical membrane-spanning segment. Topologically, residues 130 to 152 (HRCLGVLRPLHSLRWGRARYARR) are cytoplasmic. A helical membrane pass occupies residues 153 to 172 (VAAVVWVLVLACQAPVLYFV). The Extracellular portion of the chain corresponds to 173–194 (TTSVRGTRITCHDTSARELFSH). The chain crosses the membrane as a helical span at residues 195–220 (FVAYSSVMLGLLFAVPFSVILVCYVL). Topologically, residues 221–246 (MARRLLKPAYGTTGGLPRAKRKSVRT) are cytoplasmic. A helical transmembrane segment spans residues 247-269 (IALVLAVFALCFLPFHVTRTLYY). Residues 270–287 (SFRSLDLSCHTLNAINMA) are Extracellular-facing. A helical transmembrane segment spans residues 288 to 309 (YKITRPLASANSCLDPVLYFLA). Residues 310–373 (GQRLVRFARD…AGSETKDIRL (64 aa)) are Cytoplasmic-facing. Residues 318–373 (RDAKPPTEPTPSPQARRKLGLHRPNRTVRKDLSVSSDDSRRTESTPAGSETKDIRL) are disordered. Residues 332–344 (ARRKLGLHRPNRT) are compositionally biased toward basic residues. The segment covering 345–360 (VRKDLSVSSDDSRRTE) has biased composition (basic and acidic residues).

The protein belongs to the G-protein coupled receptor 1 family. As to expression, spleen, testis, kidney, liver, lung, heart and brain.

The protein localises to the cell membrane. Functionally, receptor for ATP and UTP coupled to G-proteins that activate a phosphatidylinositol-calcium second messenger system. The affinity range is UTP = ATP &gt; ATP-gamma-S &gt;&gt; 2-methylthio-ATP = ADP. This chain is P2Y purinoceptor 2 (P2ry2), found in Mus musculus (Mouse).